The chain runs to 325 residues: Fructose-1,6-bisphosphatase class 1 (325 aa).

Mg(2+)-binding residues include glutamate 84, aspartate 103, leucine 105, and aspartate 106. Substrate is bound by residues 106–109 (DGSS), asparagine 196, and lysine 262. Mg(2+) is bound at residue glutamate 268.

This sequence belongs to the FBPase class 1 family. As to quaternary structure, homotetramer. Requires Mg(2+) as cofactor.

The protein resides in the cytoplasm. It catalyses the reaction beta-D-fructose 1,6-bisphosphate + H2O = beta-D-fructose 6-phosphate + phosphate. Its pathway is carbohydrate biosynthesis; gluconeogenesis. This Shewanella baltica (strain OS195) protein is Fructose-1,6-bisphosphatase class 1.